The primary structure comprises 945 residues: Netrin receptor UNC5B (945 aa).

The signal sequence occupies residues 1–26; it reads MRARSGVRSALLLALLLCWDPTPSLA. At 27 to 377 the chain is on the extracellular side; it reads GVDSAGQVLP…LETSGDVALY (351 aa). One can recognise an Ig-like domain in the interval 48 to 145; sequence PYFLLEPQDA…SGTTKSRRAY (98 aa). Cystine bridges form between cysteine 69–cysteine 130, cysteine 81–cysteine 128, cysteine 174–cysteine 225, cysteine 258–cysteine 295, cysteine 262–cysteine 299, cysteine 273–cysteine 285, cysteine 314–cysteine 348, cysteine 318–cysteine 353, and cysteine 326–cysteine 338. An Ig-like C2-type domain is found at 153-242; the sequence is KNFDQEPLAK…KRRSTTATVI (90 aa). Residue asparagine 222 is glycosylated (N-linked (GlcNAc...) asparagine). 2 consecutive TSP type-1 domains span residues 246 to 300 and 302 to 354; these read NGGW…TVCP and DGAW…GLCV. Asparagine 347 carries N-linked (GlcNAc...) asparagine glycosylation. Residues 378-398 form a helical membrane-spanning segment; that stretch reads AGLVVAVFVVVAVLMAVGVIV. Topologically, residues 399–945 are cytoplasmic; that stretch reads YRRNCRDFDT…LVAMATDGDC (547 aa). Cysteine 403 is lipidated: S-palmitoyl cysteine. The ZU5 domain maps to 543–686; that stretch reads SSVSGTFGCL…LGTYVFMGES (144 aa). Tyrosine 581 carries the post-translational modification Phosphotyrosine. The UPA domain stretch occupies residues 689–838; the sequence is RSAVKRLQLA…AETPAGSLDA (150 aa). Residues 707–725 form an interaction with DCC region; it reads SLEYSLRVYCLEDTPVALK. Positions 865–943 constitute a Death domain; it reads KICSSLDAPN…EMLVAMATDG (79 aa).

This sequence belongs to the unc-5 family. Interacts with the cytoplasmic part of DCC. Interacts with GNAI2 via its cytoplasmic part. Interacts (via death domain) with DAPK1 (via death domain). Interacts (via extracellular domain) with FLRT2 and FLRT3 (via extracellular domain), but has higher affinity for FLRT3. Identified in a complex with FLRT3 and ADGRL3; does not interact with ADGRL3 by itself. Phosphorylated on cytoplasmic tyrosine residues. Post-translationally, palmitoylation is required for pro-apoptotic activity, but not for location at lipid rafts. In terms of processing, proteolytically cleaved by caspases during apoptosis. The cleavage does not take place when the receptor is associated with netrin ligand. Its cleavage by caspases is required to induce apoptosis. Highly expressed in brain. Expressed in lung during late development. Expressed during early blood vessel formation, in the semicircular canal and in a dorsal to ventral gradient in the retina.

The protein localises to the cell membrane. The protein resides in the membrane raft. Receptor for netrin required for axon guidance. Mediates axon repulsion of neuronal growth cones in the developing nervous system upon ligand binding. Axon repulsion in growth cones may be caused by its association with DCC that may trigger signaling for repulsion. Functions as a netrin receptor that negatively regulates vascular branching during angiogenesis. Mediates retraction of tip cell filopodia on endothelial growth cones in response to netrin. It also acts as a dependence receptor required for apoptosis induction when not associated with netrin ligand. Mediates apoptosis by activating DAPK1. In the absence of NTN1, activates DAPK1 by reducing its autoinhibitory phosphorylation at Ser-308 thereby increasing its catalytic activity. The polypeptide is Netrin receptor UNC5B (Unc5b) (Mus musculus (Mouse)).